The primary structure comprises 459 residues: Cysteine--tRNA ligase (459 aa).

Cysteine 28 is a Zn(2+) binding site. Residues 30–40 carry the 'HIGH' region motif; it reads VTVYDLCHFGH. Zn(2+)-binding residues include cysteine 209, histidine 234, and glutamate 238. The 'KMSKS' region signature appears at 266–270; the sequence is KMSKS. Position 269 (lysine 269) interacts with ATP.

Belongs to the class-I aminoacyl-tRNA synthetase family. As to quaternary structure, monomer. The cofactor is Zn(2+).

Its subcellular location is the cytoplasm. The enzyme catalyses tRNA(Cys) + L-cysteine + ATP = L-cysteinyl-tRNA(Cys) + AMP + diphosphate. The sequence is that of Cysteine--tRNA ligase from Actinobacillus succinogenes (strain ATCC 55618 / DSM 22257 / CCUG 43843 / 130Z).